Reading from the N-terminus, the 660-residue chain is Probable alpha-galactosidase D (660 aa).

Positions 1-20 are cleaved as a signal peptide; sequence MLLHFILYAALSSVVTSVSL. N-linked (GlcNAc...) asparagine glycosylation is found at Asn-47, Asn-91, and Asn-129. Cys-124 and Cys-157 are disulfide-bonded. Catalysis depends on Asp-155, which acts as the Nucleophile. 2 N-linked (GlcNAc...) asparagine glycosylation sites follow: Asn-182 and Asn-191. 200-204 is a substrate binding site; that stretch reads EWGIS. Residue Asp-222 is the Proton donor of the active site. Asn-351, Asn-403, Asn-460, Asn-492, Asn-506, Asn-514, and Asn-584 each carry an N-linked (GlcNAc...) asparagine glycan.

It belongs to the glycosyl hydrolase 27 family.

It is found in the secreted. It catalyses the reaction Hydrolysis of terminal, non-reducing alpha-D-galactose residues in alpha-D-galactosides, including galactose oligosaccharides, galactomannans and galactolipids.. Its function is as follows. Hydrolyzes a variety of simple alpha-D-galactoside as well as more complex molecules such as oligosaccharides and polysaccharides. The chain is Probable alpha-galactosidase D (aglD) from Aspergillus niger (strain ATCC MYA-4892 / CBS 513.88 / FGSC A1513).